A 66-amino-acid polypeptide reads, in one-letter code: Large ribosomal subunit protein uL29 (66 aa).

Belongs to the universal ribosomal protein uL29 family.

The chain is Large ribosomal subunit protein uL29 from Bartonella henselae (strain ATCC 49882 / DSM 28221 / CCUG 30454 / Houston 1) (Rochalimaea henselae).